Reading from the N-terminus, the 249-residue chain is 1-(5-phosphoribosyl)-5-[(5-phosphoribosylamino)methylideneamino] imidazole-4-carboxamide isomerase (249 aa).

The Proton acceptor role is filled by Asp11. Asp133 functions as the Proton donor in the catalytic mechanism.

It belongs to the HisA/HisF family.

Its subcellular location is the cytoplasm. It catalyses the reaction 1-(5-phospho-beta-D-ribosyl)-5-[(5-phospho-beta-D-ribosylamino)methylideneamino]imidazole-4-carboxamide = 5-[(5-phospho-1-deoxy-D-ribulos-1-ylimino)methylamino]-1-(5-phospho-beta-D-ribosyl)imidazole-4-carboxamide. It participates in amino-acid biosynthesis; L-histidine biosynthesis; L-histidine from 5-phospho-alpha-D-ribose 1-diphosphate: step 4/9. The chain is 1-(5-phosphoribosyl)-5-[(5-phosphoribosylamino)methylideneamino] imidazole-4-carboxamide isomerase from Mannheimia succiniciproducens (strain KCTC 0769BP / MBEL55E).